A 49-amino-acid chain; its full sequence is MPAFGECQKIINPQGLPLEALSQSERIFLEFCELYDSYPEEIKEAIKQW.

This is an uncharacterized protein from Sulfolobus islandicus filamentous virus (isolate Iceland/Hveragerdi) (SIFV).